We begin with the raw amino-acid sequence, 492 residues long: T-box transcription factor TBX5-A (492 aa).

The disordered stretch occupies residues 1–43 (MADSEDTFRLQNSPSDSEPKDLQNEGKSDKQNAAVSKSPSSQT). Positions 17–30 (SEPKDLQNEGKSDK) are enriched in basic and acidic residues. Residues 31 to 43 (QNAAVSKSPSSQT) show a composition bias toward polar residues. The T-box DNA-binding region spans 62-237 (LWTKFHEVGT…NNPFAKGFRG (176 aa)). The disordered stretch occupies residues 331–352 (AGEHPYKKPYVESSSSEDDHYY).

As to quaternary structure, monomer. Homodimer (via the T-box); binds DNA as homodimer. As to expression, expressed in the dorsal optic cup of developing eye, pectoral fin buds and heart. At 31 hpf, when the pectoral fin buds have begun bulging outwards, restricted expression is detected throughout the mesenchyme of the early fin buds and these high levels of expression continue until later stages.

The protein localises to the nucleus. It is found in the cytoplasm. Required for pectoral fin formation. Together with tbx5b, involved in eye and heart development. Required for the looping stage of heart development. May bind to the core DNA motif of promoters. This Danio rerio (Zebrafish) protein is T-box transcription factor TBX5-A (tbx5a).